The following is a 689-amino-acid chain: Glycine--tRNA ligase beta subunit (689 aa).

It belongs to the class-II aminoacyl-tRNA synthetase family. Tetramer of two alpha and two beta subunits.

It localises to the cytoplasm. It catalyses the reaction tRNA(Gly) + glycine + ATP = glycyl-tRNA(Gly) + AMP + diphosphate. In Escherichia coli O127:H6 (strain E2348/69 / EPEC), this protein is Glycine--tRNA ligase beta subunit.